The primary structure comprises 406 residues: Eukaryotic initiation factor 4A-I (406 aa).

The segment at 1–21 (MSASQDSRSRDNGPDGMEPEG) is disordered. The residue at position 2 (Ser2) is an N-acetylserine. Ser4 is modified (phosphoserine). Positions 32–60 (DSFDDMNLSESLLRGIYAYGFEKPSAIQQ) match the Q motif motif. Residues 63–234 (ILPCIKGYDV…KKFMRDPIRI (172 aa)) form the Helicase ATP-binding domain. Residue 76 to 83 (AQSGTGKT) coordinates ATP. Lys118 bears the N6-acetyllysine mark. Residue Lys146 forms a Glycyl lysine isopeptide (Lys-Gly) (interchain with G-Cter in SUMO2) linkage. Phosphothreonine is present on Thr158. The residue at position 174 (Lys174) is an N6-acetyllysine. Positions 182-185 (DEAD) match the DEAD box motif. Lys193 is modified (N6-acetyllysine). Residue Lys225 forms a Glycyl lysine isopeptide (Lys-Gly) (interchain with G-Cter in SUMO2) linkage. Position 238 is an N6-acetyllysine; alternate (Lys238). Residue Lys238 forms a Glycyl lysine isopeptide (Lys-Gly) (interchain with G-Cter in SUMO2); alternate linkage. The Helicase C-terminal domain occupies 245–406 (GIRQFYINVE…EMPLNVADLI (162 aa)). Glycyl lysine isopeptide (Lys-Gly) (interchain with G-Cter in SUMO2) cross-links involve residues Lys309, Lys369, and Lys381.

This sequence belongs to the DEAD box helicase family. eIF4A subfamily. In terms of assembly, eIF4F is a multi-subunit complex, the composition of which varies with external and internal environmental conditions. It is composed of at least EIF4A, EIF4E and EIF4G1/EIF4G3. Interacts with PAIP1, EIF4E and UPF2. Found in a complex with XPO7, EIF4A1, ARHGAP1, VPS26A, VPS29, VPS35 and SFN. May interact with NOM1. Interacts with PDCD4; this interferes with the interaction between EIF4A and EIF4G. Interacts with RBM4. Interacts with DDX3X in an RNA-independent manner. Interacts with PKP1 (via N-terminus); the interaction promotes EIF4A1 recruitment to the cap-dependent translation complex and EIF4A1 ATPase activity.

The protein resides in the cytoplasm. It localises to the perinuclear region. The protein localises to the cell membrane. Its subcellular location is the stress granule. The catalysed reaction is ATP + H2O = ADP + phosphate + H(+). Its function is as follows. ATP-dependent RNA helicase which is a subunit of the eIF4F complex involved in cap recognition and is required for mRNA binding to ribosome. In the current model of translation initiation, eIF4A unwinds RNA secondary structures in the 5'-UTR of mRNAs which is necessary to allow efficient binding of the small ribosomal subunit, and subsequent scanning for the initiator codon. As a result, promotes cell proliferation and growth. In Macaca fascicularis (Crab-eating macaque), this protein is Eukaryotic initiation factor 4A-I (EIF4A1).